A 158-amino-acid polypeptide reads, in one-letter code: Endoribonuclease YbeY (158 aa).

Residues histidine 117, histidine 121, and histidine 127 each contribute to the Zn(2+) site.

Belongs to the endoribonuclease YbeY family. It depends on Zn(2+) as a cofactor.

It localises to the cytoplasm. Its function is as follows. Single strand-specific metallo-endoribonuclease involved in late-stage 70S ribosome quality control and in maturation of the 3' terminus of the 16S rRNA. In Psychromonas ingrahamii (strain DSM 17664 / CCUG 51855 / 37), this protein is Endoribonuclease YbeY.